The primary structure comprises 71 residues: uncharacterized protein (71 aa).

The chain crosses the membrane as a helical span at residues 24–44 (FGGGGLSTAIYSIFAFFSIPL).

It is found in the membrane. This is an uncharacterized protein from Schizosaccharomyces pombe (strain 972 / ATCC 24843) (Fission yeast).